We begin with the raw amino-acid sequence, 212 residues long: Leucyl/phenylalanyl-tRNA--protein transferase (212 aa).

It belongs to the L/F-transferase family.

Its subcellular location is the cytoplasm. It catalyses the reaction N-terminal L-lysyl-[protein] + L-leucyl-tRNA(Leu) = N-terminal L-leucyl-L-lysyl-[protein] + tRNA(Leu) + H(+). The enzyme catalyses N-terminal L-arginyl-[protein] + L-leucyl-tRNA(Leu) = N-terminal L-leucyl-L-arginyl-[protein] + tRNA(Leu) + H(+). The catalysed reaction is L-phenylalanyl-tRNA(Phe) + an N-terminal L-alpha-aminoacyl-[protein] = an N-terminal L-phenylalanyl-L-alpha-aminoacyl-[protein] + tRNA(Phe). Its function is as follows. Functions in the N-end rule pathway of protein degradation where it conjugates Leu, Phe and, less efficiently, Met from aminoacyl-tRNAs to the N-termini of proteins containing an N-terminal arginine or lysine. In Flavobacterium johnsoniae (strain ATCC 17061 / DSM 2064 / JCM 8514 / BCRC 14874 / CCUG 350202 / NBRC 14942 / NCIMB 11054 / UW101) (Cytophaga johnsonae), this protein is Leucyl/phenylalanyl-tRNA--protein transferase.